The chain runs to 414 residues: Myb1 protein (414 aa).

Myb-like domains follow at residues 242–266, 268–320, and 328–381; these read WNEVSEKLSNNQNAKECQKMWLYYG, FEDD…IKIN, and KVKL…TNLN.

It localises to the nucleus. Transcriptional activator. Has a role in the parasite erythrocytic cycle where it directly regulates key genes involved in cell cycle regulation and progression. Binds directly to Myb regulatory elements. In Plasmodium falciparum (isolate 3D7), this protein is Myb1 protein.